Consider the following 290-residue polypeptide: MASQYSVRKVGAPYTLEHRVYIEKDGVPVSPFHDIPLYANAEQTILNMVVEIPRWTNAKQEISKEELLNPIKQDTKKGKLRFVRNCFPHKGYLWNYGAFPQTWEDPNSIHPETKAKGDNDPLDVCEIGELVGYTGQVKQVKVLGVMALLDEEETDWKVIVIDVNDPLAPKLNDVEDVERHLPGLIRATNEWFRIYKIPDGKPENQFAFTGECKNKTYAMDVVRECNEAWERLITGKTAPGGVSTTNVTVQHSSSRVAPDQLPPLPPNENLPPAPIDSSIDKWFFISGASA.

Arg81 serves as a coordination point for diphosphate. Mg(2+) is bound by residues Asp118, Asp123, and Asp155.

This sequence belongs to the PPase family. The cofactor is Mg(2+).

It localises to the cytoplasm. The catalysed reaction is diphosphate + H2O = 2 phosphate + H(+). This Neurospora crassa (strain ATCC 24698 / 74-OR23-1A / CBS 708.71 / DSM 1257 / FGSC 987) protein is Inorganic pyrophosphatase (ipp-1).